The following is a 123-amino-acid chain: Integration host factor subunit alpha (123 aa).

The protein belongs to the bacterial histone-like protein family. As to quaternary structure, heterodimer of an alpha and a beta chain.

This protein is one of the two subunits of integration host factor, a specific DNA-binding protein that functions in genetic recombination as well as in transcriptional and translational control. The protein is Integration host factor subunit alpha of Polaromonas naphthalenivorans (strain CJ2).